The chain runs to 71 residues: Sec-independent protein translocase protein TatA (71 aa).

A helical membrane pass occupies residues Met1–Gly21. The tract at residues Leu43 to His71 is disordered. Positions Gln52–Gln65 are enriched in polar residues.

The protein belongs to the TatA/E family. The Tat system comprises two distinct complexes: a TatABC complex, containing multiple copies of TatA, TatB and TatC subunits, and a separate TatA complex, containing only TatA subunits. Substrates initially bind to the TatABC complex, which probably triggers association of the separate TatA complex to form the active translocon.

It localises to the cell inner membrane. In terms of biological role, part of the twin-arginine translocation (Tat) system that transports large folded proteins containing a characteristic twin-arginine motif in their signal peptide across membranes. TatA could form the protein-conducting channel of the Tat system. The polypeptide is Sec-independent protein translocase protein TatA (Xylella fastidiosa (strain M12)).